The sequence spans 315 residues: DNA-directed RNA polymerase subunit alpha (315 aa).

An alpha N-terminal domain (alpha-NTD) region spans residues 1 to 228 (MLEIEKPIIE…EHFKLFMSLT (228 aa)). The interval 245–315 (KEKVLEMTVE…LGLCLKLNDE (71 aa)) is alpha C-terminal domain (alpha-CTD).

This sequence belongs to the RNA polymerase alpha chain family. As to quaternary structure, homodimer. The RNAP catalytic core consists of 2 alpha, 1 beta, 1 beta' and 1 omega subunit. When a sigma factor is associated with the core the holoenzyme is formed, which can initiate transcription.

The catalysed reaction is RNA(n) + a ribonucleoside 5'-triphosphate = RNA(n+1) + diphosphate. In terms of biological role, DNA-dependent RNA polymerase catalyzes the transcription of DNA into RNA using the four ribonucleoside triphosphates as substrates. This Clostridium botulinum (strain Alaska E43 / Type E3) protein is DNA-directed RNA polymerase subunit alpha.